The following is a 304-amino-acid chain: Carnitine monooxygenase reductase subunit (304 aa).

The FAD-binding FR-type domain maps to 1-93 (MEQLTPLIKR…SEPKNLFPLA (93 aa)). One can recognise a 2Fe-2S ferredoxin-type domain in the interval 219-304 (FTVVLAKSNQ…AKGKKLVLDL (86 aa)). [2Fe-2S] cluster is bound by residues Cys-253, Cys-258, Cys-261, and Cys-291.

It belongs to the PDR/VanB family. CntB subfamily. As to quaternary structure, composed of an oxygenase subunit and a reductase subunit. The cofactor is FMN. Requires [2Fe-2S] cluster as cofactor.

The enzyme catalyses (R)-carnitine + NADH + O2 + H(+) = (3R)-3-hydroxy-4-oxobutanoate + trimethylamine + NAD(+) + H2O. The catalysed reaction is (R)-carnitine + NADPH + O2 + H(+) = (3R)-3-hydroxy-4-oxobutanoate + trimethylamine + NADP(+) + H2O. It participates in amine and polyamine metabolism; carnitine metabolism. With respect to regulation, inhibited by EDTA. Converts carnitine to trimethylamine and malic semialdehyde. Acts on both enantiomers. The protein is Carnitine monooxygenase reductase subunit of Acinetobacter pittii (strain PHEA-2).